A 147-amino-acid chain; its full sequence is 3-dehydroquinate dehydratase (147 aa).

Residue Tyr23 is the Proton acceptor of the active site. Positions 75, 81, and 88 each coordinate substrate. His101 serves as the catalytic Proton donor. Residues 102–103 and Arg112 contribute to the substrate site; that span reads LS.

Belongs to the type-II 3-dehydroquinase family. Homododecamer.

The enzyme catalyses 3-dehydroquinate = 3-dehydroshikimate + H2O. It functions in the pathway metabolic intermediate biosynthesis; chorismate biosynthesis; chorismate from D-erythrose 4-phosphate and phosphoenolpyruvate: step 3/7. Its function is as follows. Catalyzes a trans-dehydration via an enolate intermediate. This Stenotrophomonas maltophilia (strain K279a) protein is 3-dehydroquinate dehydratase.